Consider the following 430-residue polypeptide: Trigger factor (430 aa).

Residues 165–250 (TDIAIFDFEG…LHQIKTKKIP (86 aa)) form the PPIase FKBP-type domain.

The protein belongs to the FKBP-type PPIase family. Tig subfamily.

Its subcellular location is the cytoplasm. The catalysed reaction is [protein]-peptidylproline (omega=180) = [protein]-peptidylproline (omega=0). In terms of biological role, involved in protein export. Acts as a chaperone by maintaining the newly synthesized protein in an open conformation. Functions as a peptidyl-prolyl cis-trans isomerase. The chain is Trigger factor from Onion yellows phytoplasma (strain OY-M).